A 320-amino-acid chain; its full sequence is Cytochrome f (320 aa).

Positions 1–35 (MQTRNAFSWIKKEITRSISVLLMIYIITRAPISNA) are cleaved as a signal peptide. Heme is bound by residues Tyr36, Cys56, Cys59, and His60. Residues 286-305 (VQGLLLFLASIILAQIFLVL) traverse the membrane as a helical segment.

It belongs to the cytochrome f family. The 4 large subunits of the cytochrome b6-f complex are cytochrome b6, subunit IV (17 kDa polypeptide, petD), cytochrome f and the Rieske protein, while the 4 small subunits are PetG, PetL, PetM and PetN. The complex functions as a dimer. Heme is required as a cofactor.

The protein resides in the plastid. It localises to the chloroplast thylakoid membrane. In terms of biological role, component of the cytochrome b6-f complex, which mediates electron transfer between photosystem II (PSII) and photosystem I (PSI), cyclic electron flow around PSI, and state transitions. The polypeptide is Cytochrome f (petA) (Vicia faba (Broad bean)).